Consider the following 286-residue polypeptide: Cbb3-type cytochrome c oxidase subunit CcoP (286 aa).

2 helical membrane passes run 11 to 31 (FGLI…SSLI) and 62 to 82 (VGWI…FFFG). Cytochrome c domains lie at 116 to 195 (ELVD…MAEL) and 205 to 286 (QLID…LSNR). The heme c site is built by C129, C132, H133, M174, C219, C222, H223, and M264.

It belongs to the CcoP / FixP family. As to quaternary structure, component of the cbb3-type cytochrome c oxidase at least composed of CcoN, CcoO, CcoQ and CcoP. Requires heme c as cofactor.

The protein localises to the cell inner membrane. The protein operates within energy metabolism; oxidative phosphorylation. C-type cytochrome. Part of the cbb3-type cytochrome c oxidase complex. CcoP subunit is required for transferring electrons from donor cytochrome c via its heme groups to CcoO subunit. From there, electrons are shuttled to the catalytic binuclear center of CcoN subunit where oxygen reduction takes place. The complex also functions as a proton pump. This chain is Cbb3-type cytochrome c oxidase subunit CcoP, found in Helicobacter pylori (strain ATCC 700392 / 26695) (Campylobacter pylori).